Reading from the N-terminus, the 206-residue chain is Dephospho-CoA kinase (206 aa).

The region spanning 4–200 (TVALTGGIGS…ASYLKLASQF (197 aa)) is the DPCK domain. An ATP-binding site is contributed by 12 to 17 (GSGKST).

It belongs to the CoaE family.

The protein localises to the cytoplasm. The enzyme catalyses 3'-dephospho-CoA + ATP = ADP + CoA + H(+). The protein operates within cofactor biosynthesis; coenzyme A biosynthesis; CoA from (R)-pantothenate: step 5/5. Functionally, catalyzes the phosphorylation of the 3'-hydroxyl group of dephosphocoenzyme A to form coenzyme A. This chain is Dephospho-CoA kinase, found in Salmonella typhimurium (strain LT2 / SGSC1412 / ATCC 700720).